The sequence spans 122 residues: Large ribosomal subunit protein uL18 (122 aa).

This sequence belongs to the universal ribosomal protein uL18 family. As to quaternary structure, part of the 50S ribosomal subunit; part of the 5S rRNA/L5/L18/L25 subcomplex. Contacts the 5S and 23S rRNAs.

In terms of biological role, this is one of the proteins that bind and probably mediate the attachment of the 5S RNA into the large ribosomal subunit, where it forms part of the central protuberance. The sequence is that of Large ribosomal subunit protein uL18 from Desulforapulum autotrophicum (strain ATCC 43914 / DSM 3382 / VKM B-1955 / HRM2) (Desulfobacterium autotrophicum).